Consider the following 241-residue polypeptide: Phosphatidylcholine synthase (241 aa).

Residues 1-15 (MKFFNYRRVPYAEIR) lie on the Cytoplasmic side of the membrane. A helical membrane pass occupies residues 16 to 36 (AFSVHILTASGSFLAFLGVVA). At 37 to 41 (AAEHR) the chain is on the periplasmic side. A helical membrane pass occupies residues 42–62 (FVDMFWWLGLALLVDGIDGPI). Over 63–76 (ARKVQVKEVLPNWS) the chain is Cytoplasmic. The chain crosses the membrane as a helical span at residues 77 to 97 (GDTLDNVIDYVTYVLLPAFAL). Over 98–100 (YQS) the chain is Periplasmic. The helical transmembrane segment at 101-121 (GMIGEPWSFVAAGAIVVSSAI) threads the bilayer. Residues 122–133 (YYADMGMKTDEY) lie on the Cytoplasmic side of the membrane. A helical membrane pass occupies residues 134–154 (FFSGFPVVWNMVVFTLFVIQA). The Periplasmic portion of the chain corresponds to 155 to 156 (SE). The chain crosses the membrane as a helical span at residues 157–177 (VTASIVVFLSVILTFLPINFL). Residues 178 to 187 (HPVRVKRLRP) are Cytoplasmic-facing. A helical membrane pass occupies residues 188 to 208 (LNLGIFLVWSVLGMYALLLHF). Over 209 to 211 (ETP) the chain is Periplasmic. The helical transmembrane segment at 212-232 (PWVVVGVVATGLYLYVIGFIL) threads the bilayer. Topologically, residues 233 to 241 (QIFPKLGRA) are cytoplasmic.

It belongs to the CDP-alcohol phosphatidyltransferase class-I family. It depends on Mn(2+) as a cofactor.

The protein localises to the cell inner membrane. The catalysed reaction is a CDP-1,2-diacyl-sn-glycerol + choline = a 1,2-diacyl-sn-glycero-3-phosphocholine + CMP + H(+). With respect to regulation, activated by CDP-diacylglycerol especially in the presence of Triton X-100 (0.1% w/v) at concentrations where micelles are formed. Maximal activation by Triton X-100 at 0.2% w/v, but higher concentrations become inhibitory. Inhibited by EDTA and high concentrations of choline. Its function is as follows. Condenses choline with CDP-diglyceride to produce phosphatidylcholine and CMP. This chain is Phosphatidylcholine synthase (pcs), found in Rhizobium meliloti (strain 1021) (Ensifer meliloti).